The primary structure comprises 55 residues: ATP synthase F(0) complex subunit 8 (55 aa).

Residues Phe10–Ile32 form a helical membrane-spanning segment.

This sequence belongs to the ATPase protein 8 family. In terms of assembly, component of the ATP synthase complex composed at least of ATP5F1A/subunit alpha, ATP5F1B/subunit beta, ATP5MC1/subunit c (homooctomer), MT-ATP6/subunit a, MT-ATP8/subunit 8, ATP5ME/subunit e, ATP5MF/subunit f, ATP5MG/subunit g, ATP5MK/subunit k, ATP5MJ/subunit j, ATP5F1C/subunit gamma, ATP5F1D/subunit delta, ATP5F1E/subunit epsilon, ATP5PF/subunit F6, ATP5PB/subunit b, ATP5PD/subunit d, ATP5PO/subunit OSCP. ATP synthase complex consists of a soluble F(1) head domain (subunits alpha(3) and beta(3)) - the catalytic core - and a membrane F(0) domain - the membrane proton channel (subunits c, a, 8, e, f, g, k and j). These two domains are linked by a central stalk (subunits gamma, delta, and epsilon) rotating inside the F1 region and a stationary peripheral stalk (subunits F6, b, d, and OSCP).

The protein resides in the mitochondrion membrane. In terms of biological role, subunit 8, of the mitochondrial membrane ATP synthase complex (F(1)F(0) ATP synthase or Complex V) that produces ATP from ADP in the presence of a proton gradient across the membrane which is generated by electron transport complexes of the respiratory chain. ATP synthase complex consist of a soluble F(1) head domain - the catalytic core - and a membrane F(1) domain - the membrane proton channel. These two domains are linked by a central stalk rotating inside the F(1) region and a stationary peripheral stalk. During catalysis, ATP synthesis in the catalytic domain of F(1) is coupled via a rotary mechanism of the central stalk subunits to proton translocation. In vivo, can only synthesize ATP although its ATP hydrolase activity can be activated artificially in vitro. Part of the complex F(0) domain. The chain is ATP synthase F(0) complex subunit 8 from Guira guira (Guira cuckoo).